An 883-amino-acid polypeptide reads, in one-letter code: Phosphoenolpyruvate carboxylase (883 aa).

Catalysis depends on residues His-138 and Lys-546.

This sequence belongs to the PEPCase type 1 family. The cofactor is Mg(2+).

The enzyme catalyses oxaloacetate + phosphate = phosphoenolpyruvate + hydrogencarbonate. Functionally, forms oxaloacetate, a four-carbon dicarboxylic acid source for the tricarboxylic acid cycle. The sequence is that of Phosphoenolpyruvate carboxylase from Erwinia tasmaniensis (strain DSM 17950 / CFBP 7177 / CIP 109463 / NCPPB 4357 / Et1/99).